We begin with the raw amino-acid sequence, 283 residues long: 4-diphosphocytidyl-2-C-methyl-D-erythritol kinase (283 aa).

Lysine 10 is an active-site residue. 99-109 is an ATP binding site; the sequence is PMGGGLGGGSS. The active site involves aspartate 141.

It belongs to the GHMP kinase family. IspE subfamily. As to quaternary structure, homodimer.

The catalysed reaction is 4-CDP-2-C-methyl-D-erythritol + ATP = 4-CDP-2-C-methyl-D-erythritol 2-phosphate + ADP + H(+). Its pathway is isoprenoid biosynthesis; isopentenyl diphosphate biosynthesis via DXP pathway; isopentenyl diphosphate from 1-deoxy-D-xylulose 5-phosphate: step 3/6. Its function is as follows. Catalyzes the phosphorylation of the position 2 hydroxy group of 4-diphosphocytidyl-2C-methyl-D-erythritol. The sequence is that of 4-diphosphocytidyl-2-C-methyl-D-erythritol kinase from Escherichia coli O157:H7 (strain EC4115 / EHEC).